Here is a 113-residue protein sequence, read N- to C-terminus: Hydrogenase maturation factor HypA (113 aa).

His-2 contacts Ni(2+). Positions 73, 76, 89, and 92 each coordinate Zn(2+).

It belongs to the HypA/HybF family.

Involved in the maturation of [NiFe] hydrogenases. Required for nickel insertion into the metal center of the hydrogenase. This chain is Hydrogenase maturation factor HypA, found in Aeromonas salmonicida (strain A449).